The following is an 896-amino-acid chain: MKKTAHIISHSHWDREWYMPFEGHRYYLIQLMDDLLELFATDPNFRSFHMDGQTIMLEDYLNIRPEKEAEVRKYIQDGRLVIGPWYILQDAFLTSAEANVRNLLYGIKDTETFGQKREQIGYFPDTFGIYGQAPQLLAQAGIRAAVFGRGVTPTGFNNQVQHDDYSSPFSELIWEAPDGSQVIGILLANWYSNGNEIPTDEDEAQTFWVKKLRDAERFASTSQLLFMNGCDHQPVQKDVTQAIKVAETLFPDVAFKHSNFHDYLTQIKEELPKELQKITGELRNQKTDGWSTLVNTASARIYLKQANDRCQTLLTNVLEPMCLLVENKSLHRDFSEYYWKLLMENHPHDSICGCSIDAVHREMKTRFEKVEAGATTFIAEQGKEIAAQINTLHDSEEAIPLVVLKTNGTSGKRVVRHKVAMKKIYFDEMDFRHIPDRLKEIVMPTYRLEFPNKGSVPIEVQDAGVRFGYDLPRDGFRRPYYARELEVTFSYDSDLYLGYECGFLVPVEEKQTEARKELIGDPSMNTLENEAMKVMIHRNGSYSILDKTTGFEYRHLGIYEDVGDIGNEYMFKASSDGVRYTTEACEASIRIIENNSLCATVEICQTLSVPAAADERLKEEQERLVWHPDRKAGRSKERTDITLRTELTLEQGAKGLKVNVNIDNTAKDHRMRALFPVERARGNHYADSIYEIVERPNTPDPKWQNPAFDHHMQRLVSLDNGEYGLTIATKGLHEYEIVSDSIAVTLLRSVGELGDWGLFETPEAQCFGQNEAQFVLLPHKGDVLSANVYVAAYDDPVEPTVIQTEQSMGPLPHATNLFQWSGEGLVLTACKPTMDGRGMILRWFNPKREGEALIVQSTHFLQIYRSTILEEQIEKLGTENVQIEVRPQEIVTLRFE.

Histidine 12, aspartate 14, aspartate 125, and histidine 348 together coordinate a divalent metal cation. Aspartate 125 serves as the catalytic Nucleophile.

The protein belongs to the glycosyl hydrolase 38 family. A divalent metal cation is required as a cofactor.

The enzyme catalyses (2R)-2-O-(6-phospho-alpha-D-mannosyl)-glycerate + H2O = alpha-D-mannose 6-phosphate + (R)-glycerate. Functionally, may hydrolyze 6-phospho-mannosyl-D-glycerate to mannose-6-phosphate and glycerate. The polypeptide is Putative mannosylglycerate hydrolase (mngB) (Halalkalibacterium halodurans (strain ATCC BAA-125 / DSM 18197 / FERM 7344 / JCM 9153 / C-125) (Bacillus halodurans)).